Consider the following 376-residue polypeptide: Guanine nucleotide-binding protein G(s) subunit alpha (376 aa).

The N-palmitoyl glycine moiety is linked to residue Gly2. Cys3 is lipidated: S-palmitoyl cysteine. Residues 36–376 (GTHRLLLLGA…RMHLRQYELL (341 aa)) enclose the G-alpha domain. A G1 motif region spans residues 39–52 (RLLLLGAGESGKST). GTP is bound by residues 44–51 (GAGESGKS), 180–186 (LRCRVLT), 205–209 (DVGGQ), 274–277 (NKQD), and Ala348. Residues Ser51 and Thr186 each contribute to the Mg(2+) site. A G2 motif region spans residues 178 to 186 (DILRCRVLT). The G3 motif stretch occupies residues 201–210 (FHMFDVGGQR). The tract at residues 270 to 277 (ILFLNKQD) is G4 motif. Positions 346-351 (TCAVDT) are G5 motif.

It belongs to the G-alpha family. G(s) subfamily. As to quaternary structure, g proteins are composed of 3 units; alpha, beta and gamma. The alpha chain contains the guanine nucleotide binding site.

Guanine nucleotide-binding proteins (G proteins) are involved as modulators or transducers in various transmembrane signaling systems. The G(s) protein is involved in hormonal regulation of adenylate cyclase: it activates the cyclase in response to beta-adrenergic stimuli. This Lymnaea stagnalis (Great pond snail) protein is Guanine nucleotide-binding protein G(s) subunit alpha.